The chain runs to 875 residues: Alanine--tRNA ligase (875 aa).

The Zn(2+) site is built by histidine 564, histidine 568, cysteine 666, and histidine 670.

Belongs to the class-II aminoacyl-tRNA synthetase family. Homotetramer. It depends on Zn(2+) as a cofactor.

The protein resides in the cytoplasm. The enzyme catalyses tRNA(Ala) + L-alanine + ATP = L-alanyl-tRNA(Ala) + AMP + diphosphate. Catalyzes the attachment of alanine to tRNA(Ala) in a two-step reaction: alanine is first activated by ATP to form Ala-AMP and then transferred to the acceptor end of tRNA(Ala). Also edits incorrectly charged Ser-tRNA(Ala) and Gly-tRNA(Ala) via its editing domain. The protein is Alanine--tRNA ligase of Sodalis glossinidius (strain morsitans).